The following is a 1035-amino-acid chain: NHS-like protein 3 (1035 aa).

V2 is lipidated: N-myristoyl glycine. Disordered stretches follow at residues 23-44, 76-105, and 133-162; these read KAEN…AVDE, QEKQ…DEDN, and IQRK…RRST. Residues 76–90 are compositionally biased toward basic and acidic residues; it reads QEKQKLNKGGWDHGD. A phosphoserine mark is found at S93, S138, S145, and S161. A Phosphothreonine modification is found at T162. At S215 the chain carries Phosphoserine. An Asymmetric dimethylarginine modification is found at R320. Phosphoserine occurs at positions 322, 327, 330, 338, 339, 341, and 342. Disordered stretches follow at residues 332–869 and 885–1035; these read RSLG…APSS and SEGL…KELA. The segment covering 338–365 has biased composition (low complexity); that stretch reads SSVSSPQPRSRHPSSSSDTWSHSQSSDT. Positions 366–388 are enriched in polar residues; that stretch reads IVSDGSTLSSKGGSEGQPESSTA. 3 positions are modified to phosphoserine: S400, S404, and S409. Polar residues predominate over residues 411-429; it reads AEASDTLSIRSSGQLSGRS. Residues 431-449 show a composition bias toward basic residues; the sequence is SLRKLKRPPPPPRRTHSLH. Positions 517 to 532 are enriched in low complexity; that stretch reads RTLSPSSGYSSQSGTP. T531 is modified (phosphothreonine). The span at 543 to 552 shows a compositional bias: pro residues; that stretch reads PASPGKAQPP. The residue at position 545 (S545) is a Phosphoserine. Over residues 562-589 the composition is skewed to low complexity; that stretch reads SPGASVSSSLTSLCSSSSDPAPSDRSGP. At T593 the chain carries Phosphothreonine. Residues 602-624 show a composition bias toward pro residues; sequence PPHPKVPAPFSPPPSKPRSPNPA. S612 carries the post-translational modification Phosphoserine. Low complexity-rich tracts occupy residues 625–645 and 652–662; these read APAL…DASP and QTTLTPLQESP. Phosphoserine is present on residues S669 and S673. Composition is skewed to pro residues over residues 669 to 685 and 709 to 718; these read SPPP…PPPT and NWPPPPPPAP. Over residues 737–765 the composition is skewed to low complexity; that stretch reads SVASPEPAGPSGSPELVSSPAASSSSATA. The segment covering 771–784 has biased composition (pro residues); it reads PGSPDPPPAPPAPA. Over residues 838 to 848 the composition is skewed to low complexity; the sequence is GAPTPALGPSA. S858, S862, and S868 each carry phosphoserine. The span at 894 to 906 shows a compositional bias: pro residues; it reads NGPPEAEPRPPQS. S929, S959, S971, and S979 each carry phosphoserine. The segment covering 961–980 has biased composition (pro residues); that stretch reads KAPPPVARKPSVGVPPPASP. Over residues 999-1008 the composition is skewed to basic and acidic residues; sequence TQDRTKRELA.

As to expression, expressed in lung.

Able to directly activate the TNF-NFkappaB signaling pathway. This Homo sapiens (Human) protein is NHS-like protein 3.